Reading from the N-terminus, the 156-residue chain is Ribosomal RNA large subunit methyltransferase H (156 aa).

S-adenosyl-L-methionine-binding positions include Leu-73, Gly-104, and 123-128; that span reads IGPLTL.

It belongs to the RNA methyltransferase RlmH family. Homodimer.

Its subcellular location is the cytoplasm. It carries out the reaction pseudouridine(1915) in 23S rRNA + S-adenosyl-L-methionine = N(3)-methylpseudouridine(1915) in 23S rRNA + S-adenosyl-L-homocysteine + H(+). Its function is as follows. Specifically methylates the pseudouridine at position 1915 (m3Psi1915) in 23S rRNA. The protein is Ribosomal RNA large subunit methyltransferase H of Stenotrophomonas maltophilia (strain K279a).